Reading from the N-terminus, the 1002-residue chain is Vacuolar protein sorting-associated protein 18 homolog (1002 aa).

The residue at position 344 (Ser344) is a Phosphoserine. Residues Leu650 to Lys804 form a CHCR repeat. Residues Phe827–Glu880 are a coiled coil. Residues Cys885–Cys924 form an RING-type; degenerate zinc finger.

Belongs to the VPS18 family. In terms of assembly, component of the class C core vacuole/endosome tethering (CORVET) complex composed of at least Vps8, dor/Vps18, car/Vps33A and Vps16A; unlike in other species, Vps11 is not part of the Drosophila complex. Due to the reduced number of components the Drosophila CORVET complex is often referred to as the miniCORVET complex. Interacts with car/Vps33A. Interacts with ema. Component of the homotypic fusion and vacuole protein sorting (HOPS) complex, composed of Vps16A, car/Vps33A, dor/Vps18, Vps39, Vps11 and lt/Vps41. The tethering complex core made up of Vps16A, car/Vps33A and dor/Vps18 and shared by both HOPS and CORVET, preferentially associates with CORVET-specific Vps8 over HOPS-specific lt/Vps41. Interacts with Syx17 (via SNARE domain); the interaction may involve multiple components of the HOPS complex and may promote assembly of the Syx17-Snap29-Vamp7 trans-SNARE complex.

It localises to the early endosome. It is found in the late endosome membrane. The protein localises to the lysosome membrane. The protein resides in the cytoplasmic vesicle. Its subcellular location is the autophagosome. Core component of the class C core vacuole/endosome tethering (CORVET) and the homotypic fusion and vacuole protein sorting (HOPS) tethering complexes involved in endo-lysosomal vesicle trafficking and lysosome biogenesis. The CORVET complex facilitates docking and fusion of endosomal vesicles during endosome maturation, acts upstream of HOPS, but is not involved in autophagic flux. The CORVET complex may cooperate with the early endosomal tether Rbsn-5 to mediate endosomal fusion. The HOPS complex facilitates docking and fusion of lysosomes with late endosomes and several other types of vesicles. The HOPS complex is also involved in autophagy and crinophagy (the elimination of unused secretory granules through their fusion with lysosomes). The HOPS complex mediates autophagocitic flux, probably by binding autophagosome-associated Syx17/syntaxin 17, promoting assembly of the trans-SNARE complex and instigating autophagosome-lysosome fusion. Independent of Syx17/syntaxin 17, HOPS is involved in biosynthetic transport to lysosomes and lysosome-related organelles such as eye-pigment granules. Required for endocytic degradation of boss/bride of sevenless and N/Notch in developing ommatidia. Required for autophagocytosis-dependent remodeling of myofibrils and transverse-tubules (T-tubules) during metamorphosis. In larval neuromuscular junctions, essential for endosomal sorting that traffics old or dysfunctional synaptic vesicle proteins through a degradative endolysosomal route. Required to maintain normal levels of rush, which functions in endosome formation and trafficking. The chain is Vacuolar protein sorting-associated protein 18 homolog from Drosophila melanogaster (Fruit fly).